The chain runs to 72 residues: DNA-directed RNA polymerase subunit omega (72 aa).

Belongs to the RNA polymerase subunit omega family. As to quaternary structure, the RNAP catalytic core consists of 2 alpha, 1 beta, 1 beta' and 1 omega subunit. When a sigma factor is associated with the core the holoenzyme is formed, which can initiate transcription.

It catalyses the reaction RNA(n) + a ribonucleoside 5'-triphosphate = RNA(n+1) + diphosphate. Its function is as follows. Promotes RNA polymerase assembly. Latches the N- and C-terminal regions of the beta' subunit thereby facilitating its interaction with the beta and alpha subunits. This chain is DNA-directed RNA polymerase subunit omega, found in Lactobacillus johnsonii (strain CNCM I-12250 / La1 / NCC 533).